We begin with the raw amino-acid sequence, 1388 residues long: Putative ATP-dependent RNA helicase DHX57 (1388 aa).

The span at 1 to 11 (MSSSVRRKGKP) shows a compositional bias: basic residues. 2 disordered regions span residues 1–107 (MSSS…MTSE) and 121–154 (EQGA…AGQE). The span at 34–51 (HGGGGGGGGSCGGGGGGS) shows a compositional bias: gly residues. Basic and acidic residues predominate over residues 79–89 (DSNKSKGETRP). Phosphoserine occurs at positions 128 and 133. The UBA domain occupies 175-220 (PVPECAVSPLAVQKLSRYGFHTEHCQLALRICDGDLGAALEHLLRQ). The segment at 299–326 (DTSPETCKFYLKGNCKFGSKCKFKHEVP) adopts a C3H1-type zinc-finger fold. S475 bears the Phosphoserine mark. Residues 555 to 722 (LKLLSKHQVV…FSYCPVITIP (168 aa)) enclose the Helicase ATP-binding domain. 568 to 575 (GMTGCGKT) serves as a coordination point for ATP. The DEVH box motif lies at 669–672 (DEVH). In terms of domain architecture, Helicase C-terminal spans 832-1012 (LIEALLEWIV…QLCLRIKILE (181 aa)).

Belongs to the DEAD box helicase family. DEAH subfamily.

The enzyme catalyses ATP + H2O = ADP + phosphate + H(+). Functionally, probable ATP-binding RNA helicase. The sequence is that of Putative ATP-dependent RNA helicase DHX57 (Dhx57) from Mus musculus (Mouse).